We begin with the raw amino-acid sequence, 1408 residues long: MKSLLDLFKQFTPDEHFDAIKIGMASPEKIRSWSFGEVKKPETINYRTFKPERDGLFCAKIFGPIKDYECLCGKYKRLKHRGVICEKCGVEVTQTKVRRERMGHIDLAAPCAHIWFLKSLPSRLGLVLDMTLRDIERVLYFEAYVVTDPGMTPLKKFSIMSEDDYDAKRKEYGDEYVAKMGAEGIKDLLEGLDLDVEIDKLRNDLTGSEIKIKKNAKRLKLMEAFKKSGIKPEWMVLDVLPVLPPDLRPLVPLDGGRFATSDLNDLYRRVINRNSRLRRLLELKAPEIIARNEKRMLQEAVDSLLDNGRRGKAMTGANKRALKSLADMIKGKSGRFRQNLLGKRVDYSGRSVITMGPTLKLHQCGLPKLMALELFKPFIFSRLEAMGIATTIKAAKKEVESGTPVVWDILEEVIKEHPVMLNRAPTLHRLGIQAFEPILIEGKAIQLHPLVCSAFNADFDGDQMAVHVPLSVEAQMEARTLMLASNNILFPANGEPSIVPSQDVVLGLYYTTRDRTNGKGEGLVFSDTGEVRRAFDAGELDLNARISVRLTEWTKNKETGEFIPSTKLWETTGGRALLSEILPKGLPFSNINKALKKKEISKLINVSFRKCGLKETVVFADKLLQSGFRLATKAGISICIDDMLVPKEKHDIISRAQKEVKEIEQQYVSGLVTSGERYNKVVDIWGKSGDEVSKVMMAQLSKEKVIDRHGKEVEQESFNSIYMMADSGARGSAAQIRQVAGMRGLMAKPDGSIIETPITANFREGLNVLEYFISTHGARKGLADTALKTANSGYLTRRLCDVVQDLVVTEDDCGTQEGSLMRAIVEGGEVIESLRERILGRTAVEDVLHPENRSVLAKAGAMLDEDLIDELEAAGVDEVKVRTALTCETRFGLCAKCYGRDLGRGGLINIGEAVGIIAAQSIGEPGTQLTMRTFHIGGAASRAAIASSVEAKSNGVIGFNAPMRYVTNGKGELVVIARSGEIVIHDEHGRERERHKVPYGATLTVKADQTIKAGAILANWDPLTRPIITEFAGKVLFENVEEGVTVAKQVDDVTGLSTLVVIDPKRRGATKVIRPQVKLIDATGNEVKIPGTDHSVTIGFQVGALVQVRDGQDVGPGEVLARIPVEGQKTRDITGGLPRVAELFEARTPKDKGTLAEMTGTVSFGKETKGKVRLQITDPDGKVWEDLVPKEKNILVHEGQVVNKGESIVDGPADPQDILRLLGMEELARYIVDEVQDVYRLQGVKINDKHIEVIVRQMLRRVVVENVGDSSYIAGEQVERSAMLDANDALRAEGKIPATFSNLLLGITKASLSTDSFISAASFQETTRVLTEAAIMGKRDELRGLKENVIVGRLIPAGTGMAYHEARKAKDLMDDAERRAIAEAEAAELEAATATAPADAGGDSPATE.

Zn(2+) contacts are provided by C70, C72, C85, and C88. Mg(2+) is bound by residues D458, D460, and D462. Zn(2+)-binding residues include C813, C887, C894, and C897. The tract at residues 1387–1408 (AELEAATATAPADAGGDSPATE) is disordered. Positions 1389–1408 (LEAATATAPADAGGDSPATE) are enriched in low complexity.

It belongs to the RNA polymerase beta' chain family. In terms of assembly, the RNAP catalytic core consists of 2 alpha, 1 beta, 1 beta' and 1 omega subunit. When a sigma factor is associated with the core the holoenzyme is formed, which can initiate transcription. Requires Mg(2+) as cofactor. Zn(2+) serves as cofactor.

The enzyme catalyses RNA(n) + a ribonucleoside 5'-triphosphate = RNA(n+1) + diphosphate. Its function is as follows. DNA-dependent RNA polymerase catalyzes the transcription of DNA into RNA using the four ribonucleoside triphosphates as substrates. This chain is DNA-directed RNA polymerase subunit beta', found in Polaromonas sp. (strain JS666 / ATCC BAA-500).